Here is a 705-residue protein sequence, read N- to C-terminus: Polyribonucleotide nucleotidyltransferase (705 aa).

The Mg(2+) site is built by D487 and D493. The KH domain maps to 554–613 (PKILTMAIEPDKIRDVIGPSGKQINQIIDETGVKIDIEQDGSIFISSTDNEMNKKAKQII). The 69-residue stretch at 623-691 (GQIYLGKVKR…RQGRVNLSRK (69 aa)) folds into the S1 motif domain.

It belongs to the polyribonucleotide nucleotidyltransferase family. Mg(2+) is required as a cofactor.

Its subcellular location is the cytoplasm. It carries out the reaction RNA(n+1) + phosphate = RNA(n) + a ribonucleoside 5'-diphosphate. Functionally, involved in mRNA degradation. Catalyzes the phosphorolysis of single-stranded polyribonucleotides processively in the 3'- to 5'-direction. In Oceanobacillus iheyensis (strain DSM 14371 / CIP 107618 / JCM 11309 / KCTC 3954 / HTE831), this protein is Polyribonucleotide nucleotidyltransferase.